The following is a 1011-amino-acid chain: Cell division cycle-associated protein 2 (1011 aa).

A compositionally biased stretch (polar residues) spans 1–22 (MDTCSQESEPLQTKESPINNAG). A disordered region spans residues 1–26 (MDTCSQESEPLQTKESPINNAGKTPL). 5 positions are modified to phosphoserine: S125, S130, S209, S293, and S310. Residue T313 is modified to Phosphothreonine. One can recognise a PP1-binding domain in the interval 380-440 (KRKRVTFGED…PEWLPQPNFD (61 aa)). Phosphoserine occurs at positions 391 and 398. 2 disordered regions span residues 395-438 (LDES…PQPN) and 522-544 (PCKE…KVLP). T403 carries the phosphothreonine modification. Low complexity predominate over residues 418-431 (SSLSPPLLEQSPVP). Residue S428 is modified to Phosphoserine. Positions 522-543 (PCKEKKTNRRKSQESKHADKVL) are enriched in basic and acidic residues. Phosphoserine occurs at positions 583, 702, and 747. K753 participates in a covalent cross-link: Glycyl lysine isopeptide (Lys-Gly) (interchain with G-Cter in SUMO2). The segment covering 790–803 (DQRKVSKSQGEDLG) has biased composition (basic and acidic residues). Disordered regions lie at residues 790–835 (DQRK…GLHL) and 896–1011 (GLVW…LSEN). Residues 931 to 945 (SSRQDPCTLPSTSSE) show a composition bias toward polar residues. S967 carries the post-translational modification Phosphoserine. Residues 968–983 (FCTSTLANPKSTTQSR) show a composition bias toward polar residues. Residues 993-1011 (QKRENTLQETSRESDLSEN) show a composition bias toward basic and acidic residues.

Interacts with PPP1CC. In terms of processing, phosphorylated by CDK1. May regulate its subcellular location.

The protein resides in the nucleus. Its function is as follows. Regulator of chromosome structure during mitosis required for condensin-depleted chromosomes to retain their compact architecture through anaphase. Acts by mediating the recruitment of phopsphatase PP1-gamma subunit (PPP1CC) to chromatin at anaphase and into the following interphase. At anaphase onset, its association with chromatin targets a pool of PPP1CC to dephosphorylate substrates. The chain is Cell division cycle-associated protein 2 (CDCA2) from Bos taurus (Bovine).